Here is a 129-residue protein sequence, read N- to C-terminus: Large ribosomal subunit protein bL17 (129 aa).

It belongs to the bacterial ribosomal protein bL17 family. In terms of assembly, part of the 50S ribosomal subunit. Contacts protein L32.

In Stutzerimonas stutzeri (strain A1501) (Pseudomonas stutzeri), this protein is Large ribosomal subunit protein bL17.